Here is a 525-residue protein sequence, read N- to C-terminus: Lysine--tRNA ligase (525 aa).

Residues 40–48 carry the 'HIGH' region motif; that stretch reads ASGIPHMGS. Positions 295–299 match the 'KMSKS' region motif; it reads KISKS. Lys-298 provides a ligand contact to ATP.

The protein belongs to the class-I aminoacyl-tRNA synthetase family.

The protein resides in the cytoplasm. The enzyme catalyses tRNA(Lys) + L-lysine + ATP = L-lysyl-tRNA(Lys) + AMP + diphosphate. This Cenarchaeum symbiosum (strain A) protein is Lysine--tRNA ligase (lysS).